The sequence spans 471 residues: Iroquois-class homeodomain protein IRX-2 (471 aa).

Residues 112–175 (LNDPAYRKNA…ANARRRLKKE (64 aa)) constitute a DNA-binding region (homeobox; TALE-type). Disordered regions lie at residues 176 to 373 (NKMT…SPYP) and 424 to 471 (APKA…QPYL). At S186 the chain carries Phosphoserine. Residues 195 to 209 (DATRSKDESPDKAQE) are compositionally biased toward basic and acidic residues. Residues 261 to 273 (DDLEDDEDDDEEG) show a composition bias toward acidic residues. A compositionally biased stretch (low complexity) spans 355-367 (PAAAAPASTGAPP). Residues 462 to 471 (VVGGGVQPYL) are compositionally biased toward gly residues.

It belongs to the TALE/IRO homeobox family.

The protein localises to the nucleus. The polypeptide is Iroquois-class homeodomain protein IRX-2 (IRX2) (Homo sapiens (Human)).